The sequence spans 396 residues: Aspartate aminotransferase (396 aa).

Gly34, Trp130, and Asn183 together coordinate L-aspartate. Lys246 carries the post-translational modification N6-(pyridoxal phosphate)lysine. Residue Arg374 participates in L-aspartate binding.

The protein belongs to the class-I pyridoxal-phosphate-dependent aminotransferase family. Homodimer. It depends on pyridoxal 5'-phosphate as a cofactor.

It localises to the cytoplasm. It catalyses the reaction L-aspartate + 2-oxoglutarate = oxaloacetate + L-glutamate. This Haemophilus influenzae (strain ATCC 51907 / DSM 11121 / KW20 / Rd) protein is Aspartate aminotransferase (aspC).